We begin with the raw amino-acid sequence, 447 residues long: Probable butyrate:acetyl-CoA coenzyme A-transferase (447 aa).

Glycine 220–threonine 224 serves as a coordination point for CoA. Glutamate 245 serves as the catalytic 5-glutamyl coenzyme A thioester intermediate. Residues isoleucine 320 and glycine 343 each contribute to the CoA site.

The protein belongs to the acetyl-CoA hydrolase/transferase family.

It localises to the cytoplasm. It catalyses the reaction butanoate + acetyl-CoA = butanoyl-CoA + acetate. Its pathway is lipid metabolism; butanoate metabolism. In terms of biological role, coenzyme A-transferase that converts butyrate to butyryl-CoA. Involved in the syntrophic growth of S.wolfei on butyrate in cooperation with methanogens or an appropriate hydrogen-scavenging bacterium, as part of the butyrate oxidation pathway. The chain is Probable butyrate:acetyl-CoA coenzyme A-transferase from Syntrophomonas wolfei subsp. wolfei (strain DSM 2245B / Goettingen).